We begin with the raw amino-acid sequence, 901 residues long: Valine--tRNA ligase (901 aa).

The 'KMSKS' region signature appears at 536 to 540; the sequence is KLSKS. Residue K539 coordinates ATP. A coiled-coil region spans residues 831–901; it reads LEGLISFEKE…KLQGNLEVLS (71 aa).

It belongs to the class-I aminoacyl-tRNA synthetase family. ValS type 1 subfamily. Monomer.

The protein resides in the cytoplasm. It catalyses the reaction tRNA(Val) + L-valine + ATP = L-valyl-tRNA(Val) + AMP + diphosphate. Its function is as follows. Catalyzes the attachment of valine to tRNA(Val). As ValRS can inadvertently accommodate and process structurally similar amino acids such as threonine, to avoid such errors, it has a 'posttransfer' editing activity that hydrolyzes mischarged Thr-tRNA(Val) in a tRNA-dependent manner. This is Valine--tRNA ligase from Chlorobaculum tepidum (strain ATCC 49652 / DSM 12025 / NBRC 103806 / TLS) (Chlorobium tepidum).